The primary structure comprises 208 residues: NADH-ubiquinone oxidoreductase chain 4 (208 aa).

The next 6 helical transmembrane spans lie at 23–43 (VWINVTSYSFVINMIALVTLW), 60–80 (SLSSPLTMLTIWLLPLMLLAS), 93–113 (KMYISLLITLQVLLIMTFSAN), 114–134 (ELIMFYILFEATLIPTLIIIT), 147–167 (LYFLFYTLIGSIPLLIALISI), and 188–208 (PTWSSHILWLACIMAFMIKMP).

The protein belongs to the complex I subunit 4 family. In terms of assembly, core subunit of respiratory chain NADH dehydrogenase (Complex I) which is composed of 45 different subunits.

It is found in the mitochondrion inner membrane. The enzyme catalyses a ubiquinone + NADH + 5 H(+)(in) = a ubiquinol + NAD(+) + 4 H(+)(out). Core subunit of the mitochondrial membrane respiratory chain NADH dehydrogenase (Complex I) which catalyzes electron transfer from NADH through the respiratory chain, using ubiquinone as an electron acceptor. Essential for the catalytic activity and assembly of complex I. In Phodopus sungorus (Striped hairy-footed hamster), this protein is NADH-ubiquinone oxidoreductase chain 4 (MT-ND4).